Consider the following 23-residue polypeptide: Superoxide dismutase [Mn], mitochondrial (23 aa).

It belongs to the iron/manganese superoxide dismutase family. In terms of assembly, homotetramer. The cofactor is Mn(2+).

Its subcellular location is the mitochondrion matrix. The enzyme catalyses 2 superoxide + 2 H(+) = H2O2 + O2. In terms of biological role, destroys superoxide anion radicals which are normally produced within the cells and which are toxic to biological systems. This Aquarana catesbeiana (American bullfrog) protein is Superoxide dismutase [Mn], mitochondrial.